A 75-amino-acid chain; its full sequence is UPF0352 protein YejL (75 aa).

This sequence belongs to the UPF0352 family.

The sequence is that of UPF0352 protein YejL from Escherichia coli O139:H28 (strain E24377A / ETEC).